The sequence spans 133 residues: Brain natriuretic peptide (133 aa).

The signal sequence occupies residues 1 to 22; the sequence is MVVSFVSICGLLLIFNLPLSTS. Residues 44-53 are compositionally biased toward acidic residues; it reads SMSEETEEDQ. Disordered regions lie at residues 44–76 and 93–112; these read SMSE…NRDQ and TRKN…FGRR. The cysteines at positions 108 and 124 are disulfide-linked.

Belongs to the natriuretic peptide family.

The protein localises to the secreted. Cardiac hormone which may function as a paracrine antifibrotic factor in the heart. Also plays a key role in cardiovascular homeostasis through natriuresis, diuresis, vasorelaxation, and inhibition of renin and aldosterone secretion. Has a cGMP-stimulating activity. The sequence is that of Brain natriuretic peptide (nppb) from Takifugu rubripes (Japanese pufferfish).